Consider the following 275-residue polypeptide: Orotidine 5'-phosphate decarboxylase (275 aa).

K95 acts as the Proton donor in catalysis.

This sequence belongs to the OMP decarboxylase family. Type 2 subfamily.

The enzyme catalyses orotidine 5'-phosphate + H(+) = UMP + CO2. The protein operates within pyrimidine metabolism; UMP biosynthesis via de novo pathway; UMP from orotate: step 2/2. The chain is Orotidine 5'-phosphate decarboxylase from Delftia acidovorans (strain DSM 14801 / SPH-1).